The primary structure comprises 60 residues: Large ribosomal subunit protein uL30 (60 aa).

This sequence belongs to the universal ribosomal protein uL30 family. As to quaternary structure, part of the 50S ribosomal subunit.

The polypeptide is Large ribosomal subunit protein uL30 (Streptococcus pneumoniae (strain Hungary19A-6)).